Reading from the N-terminus, the 342-residue chain is DNA repair protein RAD51 homolog 1 (342 aa).

Residues 1-24 (MTTMEQRRNQNAVQQQDDEETQHG) are disordered. The HhH domain occupies 51–80 (TVEGVAYTPRKDLLQIKGISDAKVDKIVEA). Positions 100 to 314 (QEIIQITSGS…LRKGRAEERI (215 aa)) constitute a FtsK domain. 130-137 (GEFRSGKT) contributes to the ATP binding site.

It belongs to the RecA family. RAD51 subfamily. As to quaternary structure, self-associates and interacts with XRCC3. Binds to RAD54/CHR25. Interacts with BRCA2A and BRCA2B. Can form a tripartite complex with both BRCA2B and DSS1(I). In terms of tissue distribution, detected in various tissues. Higher expression in reproductive tissues than in vegetative tissues, with the highest expression level in young flower buds. At cellular level, is expressed at low levels in flower primordia, then at higher levels in young anthers and at highest levels in both females and males meiocytes. Not detected in gametophytes.

The protein localises to the nucleus. Binds to single and double-stranded DNA and exhibits DNA-dependent ATPase activity. Unwinds duplex DNA. Component of the meiotic recombination pathway. Seems to play a role in mediating chromosome homology search, chromosome pairing and synapsis at early stages and probably chromosome crossing-over at later stages in meiosis. Probably is involved in the repair of meiotic double strand breaks (DBSs) generated by AtSPO11-1 and in homologous recombination. Its function is dispensable for vegetative growth and root mitosis. This is DNA repair protein RAD51 homolog 1 from Arabidopsis thaliana (Mouse-ear cress).